The primary structure comprises 302 residues: Glycine N-acyltransferase-like protein 1 (302 aa).

It belongs to the glycine N-acyltransferase family. As to expression, expressed in liver and kidney and, at lower levels, in pancreas, testis, ovary and stomach.

It catalyses the reaction an acyl-CoA + L-glutamine = an N(2)-acyl-L-glutamine + CoA + H(+). Its function is as follows. Acyltransferase which transfers an acyl group to the N-terminus of glutamine. Can use phenylacetyl-CoA as an acyl donor. This is Glycine N-acyltransferase-like protein 1 from Homo sapiens (Human).